A 67-amino-acid polypeptide reads, in one-letter code: Ferredoxin (67 aa).

4Fe-4S ferredoxin-type domains are found at residues 3-31 and 36-67; these read WKVS…MNDE and PKVE…IEEA. Cysteine 12, aspartate 15, and cysteine 18 together coordinate [4Fe-4S] cluster. Cysteine 22 and cysteine 49 are oxidised to a cystine. Cysteine 57 provides a ligand contact to [4Fe-4S] cluster.

Requires [4Fe-4S] cluster as cofactor. [3Fe-4S] cluster serves as cofactor.

Functionally, ferredoxins are iron-sulfur proteins that transfer electrons in a wide variety of metabolic reactions. In Pyrococcus abyssi (strain GE5 / Orsay), this protein is Ferredoxin (fdxA).